A 107-amino-acid chain; its full sequence is Proteinase inhibitor I-A (107 aa).

The signal sequence occupies residues 1 to 22 (MVKFAHVVAFLLLASLIQPLTA). Positions 23–36 (RDLEINVLQLDVSQ) are excised as a propeptide.

It belongs to the protease inhibitor I13 (potato type I serine protease inhibitor) family.

Its subcellular location is the secreted. This is Proteinase inhibitor I-A (TIMPB) from Nicotiana tabacum (Common tobacco).